Consider the following 246-residue polypeptide: Triosephosphate isomerase (246 aa).

9–11 (NWK) provides a ligand contact to substrate. H99 (electrophile) is an active-site residue. E168 (proton acceptor) is an active-site residue. Residues G174, S207, and 228 to 229 (GG) each bind substrate.

Belongs to the triosephosphate isomerase family. Homodimer.

Its subcellular location is the cytoplasm. The enzyme catalyses D-glyceraldehyde 3-phosphate = dihydroxyacetone phosphate. It participates in carbohydrate biosynthesis; gluconeogenesis. The protein operates within carbohydrate degradation; glycolysis; D-glyceraldehyde 3-phosphate from glycerone phosphate: step 1/1. Its function is as follows. Involved in the gluconeogenesis. Catalyzes stereospecifically the conversion of dihydroxyacetone phosphate (DHAP) to D-glyceraldehyde-3-phosphate (G3P). The protein is Triosephosphate isomerase of Prochlorococcus marinus (strain NATL1A).